The chain runs to 1173 residues: Alpha-mannosidase 2 (1173 aa).

The interval 1 to 21 (MPFSSYIGNSRRSSTGGGTGG) is disordered. Over 1 to 50 (MPFSSYIGNSRRSSTGGGTGGWGQSLLPTALSKSKLAINRKPRKRTLVVN) the chain is Cytoplasmic. The helical; Signal-anchor transmembrane segment at 51-71 (FIFANFFVIALTVSLLFFLLT) threads the bilayer. Over 72–1173 (LFHFGVPGPI…AYKLELRPHK (1102 aa)) the chain is Lumenal. An N-linked (GlcNAc...) asparagine glycan is attached at asparagine 106. Zn(2+) is bound by residues histidine 162 and aspartate 164. The N-linked (GlcNAc...) asparagine glycan is linked to asparagine 262. Residue aspartate 276 coordinates Zn(2+). Residue aspartate 276 is the Nucleophile of the active site. N-linked (GlcNAc...) asparagine glycosylation occurs at asparagine 467. Histidine 564 is a binding site for Zn(2+). 6 N-linked (GlcNAc...) asparagine glycosylation sites follow: asparagine 675, asparagine 772, asparagine 782, asparagine 991, asparagine 1098, and asparagine 1108.

This sequence belongs to the glycosyl hydrolase 38 family. Homodimer; disulfide-linked. Interacts with GALT1. Zn(2+) serves as cofactor. Post-translationally, glycosylated.

The protein resides in the golgi apparatus membrane. The enzyme catalyses N(4)-{beta-D-GlcNAc-(1-&gt;2)-alpha-D-Man-(1-&gt;3)-[alpha-D-Man-(1-&gt;3)-[alpha-D-Man-(1-&gt;6)]-alpha-D-Man-(1-&gt;6)]-beta-D-Man-(1-&gt;4)-beta-D-GlcNAc-(1-&gt;4)-beta-D-GlcNAc}-L-asparaginyl-[protein] + 2 H2O = 2 alpha-D-mannopyranose + an N(4)-{beta-D-GlcNAc-(1-&gt;2)-alpha-D-Man-(1-&gt;3)-[alpha-D-Man-(1-&gt;6)]-beta-D-Man-(1-&gt;4)-beta-D-GlcNAc-(1-&gt;4)-beta-D-GlcNAc}-L-asparaginyl-[protein]. Its pathway is protein modification; protein glycosylation. Inhibited by 1 mM Cu(2+) and by the class II alpha-mannosidase inhibitor swainsonine. In terms of biological role, catalyzes the first committed step in the biosynthesis of complex N-glycans. It controls conversion of high mannose to complex N-glycans; the final hydrolytic step in the N-glycan maturation pathway. Converts GlcNAcMan(5)GlcNAc(2) (Man5Gn) into GlcNAcMan(3)GlcNAc(2) (MGn) by sequential removal of two alpha1,6- and alpha1,3-linked mannose residues from the alpha1,6-mannose branch of the substrate. To a lesser extent, also able to cleave beta1,2-xylosylated Man5Gn-glycopeptide (Man5GnX-GP) and pyridylaminated substrates Man5Gn-PA and Man5GnX-PA, but not active toward Man5-glycopeptide. Required for resistance to salt stress. The protein is Alpha-mannosidase 2 of Arabidopsis thaliana (Mouse-ear cress).